The chain runs to 125 residues: Cytochrome c-556 (125 aa).

Heme-binding residues include methionine 13, cysteine 113, cysteine 116, and histidine 117. The heme c site is built by methionine 13, cysteine 113, cysteine 116, and histidine 117.

In terms of assembly, monomer. In terms of processing, binds 1 heme c group covalently per subunit.

In terms of biological role, low-spin monoheme cytochrome c. The protein is Cytochrome c-556 of Agrobacterium tumefaciens (strain apple 185).